The following is a 173-amino-acid chain: Alpha-crystallin A chain (173 aa).

Residue Met-1 is modified to N-acetylmethionine. The tract at residues 1–63 (MDIAIQHPWF…RTVLDSGISE (63 aa)) is required for complex formation with BFSP1 and BFSP2. The residue at position 6 (Gln-6) is a Deamidated glutamine; partial. Residue Ser-45 is modified to Phosphoserine. Residue Gln-50 is modified to Deamidated glutamine; partial. A sHSP domain is found at 52-162 (LFRTVLDSGI…GHSERAIPVS (111 aa)). Lys-70 carries the post-translational modification N6-acetyllysine. Gln-90 is modified (deamidated glutamine; partial). An N6-acetyllysine modification is found at Lys-99. Zn(2+) is bound at residue His-100. The residue at position 101 (Asn-101) is a Deamidated asparagine; partial. The Zn(2+) site is built by Glu-102 and His-107. Ser-122 bears the Phosphoserine mark. A Deamidated asparagine; partial modification is found at Asn-123. A disordered region spans residues 144–173 (PKIPSGVDAGHSERAIPVSREEKPSSAPSS). The segment covering 153–167 (GHSERAIPVSREEKP) has biased composition (basic and acidic residues). Position 154 (His-154) interacts with Zn(2+). A glycan (O-linked (GlcNAc) serine) is linked at Ser-162.

Belongs to the small heat shock protein (HSP20) family. Heteromer composed of three CRYAA and one CRYAB subunits. Inter-subunit bridging via zinc ions enhances stability, which is crucial as there is no protein turn over in the lens. Can also form homodimers and homotetramers (dimers of dimers) which serve as the building blocks of homooligomers. Within homooligomers, the zinc-binding motif is created from residues of 3 different molecules. His-100 and Glu-102 from one molecule are ligands of the zinc ion, and His-107 and His-154 residues from additional molecules complete the site with tetrahedral coordination geometry. Part of a complex required for lens intermediate filament formation composed of BFSP1, BFSP2 and CRYAA. Post-translationally, acetylation at Lys-70 may increase chaperone activity. In terms of processing, undergoes age-dependent proteolytical cleavage at the C-terminus.

It localises to the cytoplasm. Its subcellular location is the nucleus. Contributes to the transparency and refractive index of the lens. Acts as a chaperone, preventing aggregation of various proteins under a wide range of stress conditions. Required for the correct formation of lens intermediate filaments as part of a complex composed of BFSP1, BFSP2 and CRYAA. The polypeptide is Alpha-crystallin A chain (CRYAA) (Giraffa camelopardalis (Giraffe)).